We begin with the raw amino-acid sequence, 382 residues long: MINMKPQYYLGMMSGTSLDGVDIVLVDFSQDPQLILSDFFPMPEDLREKLTTLIQVGETTLQNLGELDHKLALLYSDCVNAFLQKNTFLPNQIQAIGCHGQTVWHSPNSQFPFTMQLGDMNLLAAKTGISVIGDFRRKDMAWGGQGAPLVPAFHEAVFSNSNFATAVLNIGGISNVSILFPNQAVIGFDTGPGNTLLDQWIEKHQGLRYDENGEWAAKGNVNKVLLDELLNEPFFSLPAPKSTGRELFNLVWLNHKIAKIREKLTALSVEMSFRPEDVQATLVELTVTSIVNALNQLQTDLPKRLLVCGGGAKNSLIMRGLHDNLLDWQVSTTTEQGFDIDYVEAAAFAWLAYCRINNLPANLPSVTGAKSAVSLGAIFPKD.

ATP is bound at residue 15 to 22; the sequence is GTSLDGVD.

This sequence belongs to the anhydro-N-acetylmuramic acid kinase family.

It catalyses the reaction 1,6-anhydro-N-acetyl-beta-muramate + ATP + H2O = N-acetyl-D-muramate 6-phosphate + ADP + H(+). It functions in the pathway amino-sugar metabolism; 1,6-anhydro-N-acetylmuramate degradation. Its pathway is cell wall biogenesis; peptidoglycan recycling. Catalyzes the specific phosphorylation of 1,6-anhydro-N-acetylmuramic acid (anhMurNAc) with the simultaneous cleavage of the 1,6-anhydro ring, generating MurNAc-6-P. Is required for the utilization of anhMurNAc either imported from the medium or derived from its own cell wall murein, and thus plays a role in cell wall recycling. The protein is Anhydro-N-acetylmuramic acid kinase of Haemophilus influenzae (strain ATCC 51907 / DSM 11121 / KW20 / Rd).